The sequence spans 445 residues: Tubulin beta chain (445 aa).

Gln11, Glu69, Ser138, Gly142, Thr143, Gly144, Asn204, and Asn226 together coordinate GTP. A Mg(2+)-binding site is contributed by Glu69. Positions 426–445 (QDATAEEEGEFEEEEGDVEA) are disordered. Positions 429-445 (TAEEEGEFEEEEGDVEA) are enriched in acidic residues.

It belongs to the tubulin family. In terms of assembly, dimer of alpha and beta chains. A typical microtubule is a hollow water-filled tube with an outer diameter of 25 nm and an inner diameter of 15 nM. Alpha-beta heterodimers associate head-to-tail to form protofilaments running lengthwise along the microtubule wall with the beta-tubulin subunit facing the microtubule plus end conferring a structural polarity. Microtubules usually have 13 protofilaments but different protofilament numbers can be found in some organisms and specialized cells. Interacts with DCX/apicortin; the interaction stabilizes microtubule assembly. Requires Mg(2+) as cofactor.

It localises to the cytoplasm. The protein localises to the cytoskeleton. Tubulin is the major constituent of microtubules, a cylinder consisting of laterally associated linear protofilaments composed of alpha- and beta-tubulin heterodimers. Microtubules grow by the addition of GTP-tubulin dimers to the microtubule end, where a stabilizing cap forms. Below the cap, tubulin dimers are in GDP-bound state, owing to GTPase activity of alpha-tubulin. In Plasmodium falciparum (isolate 3D7), this protein is Tubulin beta chain.